A 153-amino-acid chain; its full sequence is Myoglobin (153 aa).

The 146-residue stretch at G2–K147 folds into the Globin domain. H65 contributes to the nitrite binding site. Position 65 (H65) interacts with O2. A heme b-binding site is contributed by H93.

The protein belongs to the globin family. Monomeric.

It is found in the cytoplasm. Its subcellular location is the sarcoplasm. The enzyme catalyses Fe(III)-heme b-[protein] + nitric oxide + H2O = Fe(II)-heme b-[protein] + nitrite + 2 H(+). The catalysed reaction is H2O2 + AH2 = A + 2 H2O. Monomeric heme protein which primary function is to store oxygen and facilitate its diffusion within muscle tissues. Reversibly binds oxygen through a pentacoordinated heme iron and enables its timely and efficient release as needed during periods of heightened demand. Depending on the oxidative conditions of tissues and cells, and in addition to its ability to bind oxygen, it also has a nitrite reductase activity whereby it regulates the production of bioactive nitric oxide. Under stress conditions, like hypoxia and anoxia, it also protects cells against reactive oxygen species thanks to its pseudoperoxidase activity. The protein is Myoglobin (MB) of Aptenodytes forsteri (Emperor penguin).